A 130-amino-acid polypeptide reads, in one-letter code: Large ribosomal subunit protein bL12 (130 aa).

Belongs to the bacterial ribosomal protein bL12 family. In terms of assembly, homodimer. Part of the ribosomal stalk of the 50S ribosomal subunit. Forms a multimeric L10(L12)X complex, where L10 forms an elongated spine to which 2 to 4 L12 dimers bind in a sequential fashion. Binds GTP-bound translation factors.

Functionally, forms part of the ribosomal stalk which helps the ribosome interact with GTP-bound translation factors. Is thus essential for accurate translation. In Mycolicibacterium gilvum (strain PYR-GCK) (Mycobacterium gilvum (strain PYR-GCK)), this protein is Large ribosomal subunit protein bL12.